Here is a 1146-residue protein sequence, read N- to C-terminus: Probable phospholipid-transporting ATPase IIB (1146 aa).

At 1-143 (MADQIPLYPV…IKNQKYNVFT (143 aa)) the chain is on the cytoplasmic side. The chain crosses the membrane as a helical span at residues 144 to 164 (FIPGVLYEQFKFFLNLYFLVV). At 165–172 (SCSQFVPA) the chain is on the extracellular side. Residues 173 to 193 (LKIGYLYTYWAPLGFVLAVTI) traverse the membrane as a helical segment. The Cytoplasmic portion of the chain corresponds to 194-381 (AREAIDEFRR…LDLELNQLTK (188 aa)). A helical membrane pass occupies residues 382–402 (ALFLALVVLSVVMVTLQGFAG). The Extracellular portion of the chain corresponds to 403–407 (PWYRN). A helical transmembrane segment spans residues 408–427 (LFRFLLLFSYIIPISLRVNL). Residues 428–938 (DMGKAAYGWM…ALGQFVMHRG (511 aa)) lie on the Cytoplasmic side of the membrane. Residue Asp-467 is the 4-aspartylphosphate intermediate of the active site. ATP is bound by residues Asp-467, Lys-468, and Thr-469. Mg(2+) is bound at residue Asp-467. Residue Thr-469 participates in Mg(2+) binding. Over residues 508–519 (VHSQPSGHNPSS) the composition is skewed to polar residues. Residues 508–535 (VHSQPSGHNPSSAPLRRSQSSTPKVKKS) form a disordered region. The ATP site is built by Glu-590, Phe-632, Lys-637, Lys-656, Arg-685, Thr-686, Thr-765, Gly-766, Asp-767, Arg-847, and Lys-853. Asp-873 contributes to the Mg(2+) binding site. ATP contacts are provided by Asn-876 and Asp-877. Asp-877 is a binding site for Mg(2+). A helical membrane pass occupies residues 939 to 959 (LIISTMQAVFSSVFYFASVPL). The Extracellular segment spans residues 960-961 (YQ). The chain crosses the membrane as a helical span at residues 962 to 982 (GFLMVGYATIYTMFPVFSLVL). The Cytoplasmic portion of the chain corresponds to 983–1011 (DQDVKPEMAILYPELYKDLTKGRSLSFKT). Residues 1012–1032 (FLIWVLISIYQGGILMYGALL) traverse the membrane as a helical segment. Topologically, residues 1033 to 1040 (LFEDEFVH) are extracellular. A helical membrane pass occupies residues 1041–1061 (VVAISFTALILTELLMVALTI). Residues 1062-1065 (RTWH) are Cytoplasmic-facing. The helical transmembrane segment at 1066–1086 (WLMVVAEFLSLGCYVASLAFL) threads the bilayer. Topologically, residues 1087-1105 (NEYFGIGRVSFGAFLDVAF) are extracellular. Residues 1106–1128 (ITTVTFLWKVSAITVVSCLPLYV) form a helical membrane-spanning segment. Topologically, residues 1129–1146 (LKYLKRKLSPPSYSKLSS) are cytoplasmic.

This sequence belongs to the cation transport ATPase (P-type) (TC 3.A.3) family. Type IV subfamily. Mg(2+) serves as cofactor. As to expression, found in most tissues except spleen and muscle. Most abundant in testis. Also detected in fetal tissues.

It localises to the golgi apparatus. The protein localises to the trans-Golgi network membrane. The enzyme catalyses ATP + H2O + phospholipidSide 1 = ADP + phosphate + phospholipidSide 2.. In Mus musculus (Mouse), this protein is Probable phospholipid-transporting ATPase IIB (Atp9b).